Consider the following 659-residue polypeptide: tRNA-guanine(15) transglycosylase (659 aa).

The Nucleophile role is filled by Asp84. The substrate site is built by Asp119 and Ala190. Zn(2+) contacts are provided by Cys273, Cys275, and Cys278. In terms of domain architecture, PUA spans 583 to 658 (KNRVVVNKDS…QAIKTRKGMK (76 aa)).

It belongs to the archaeosine tRNA-ribosyltransferase family. The cofactor is Zn(2+).

The catalysed reaction is guanosine(15) in tRNA + 7-cyano-7-deazaguanine = 7-cyano-7-carbaguanosine(15) in tRNA + guanine. Its pathway is tRNA modification; archaeosine-tRNA biosynthesis. Exchanges the guanine residue with 7-cyano-7-deazaguanine (preQ0) at position 15 in the dihydrouridine loop (D-loop) of archaeal tRNAs. In Methanobrevibacter smithii (strain ATCC 35061 / DSM 861 / OCM 144 / PS), this protein is tRNA-guanine(15) transglycosylase.